The sequence spans 332 residues: Anthranilate phosphoribosyltransferase (332 aa).

Residues G79, 82–83 (GD), S87, 89–92 (NIST), 107–115 (KHGNRSVSS), and S119 each bind 5-phospho-alpha-D-ribose 1-diphosphate. Residue G79 participates in anthranilate binding. S91 contacts Mg(2+). Position 110 (N110) interacts with anthranilate. R165 serves as a coordination point for anthranilate. Mg(2+) is bound by residues D223 and E224.

The protein belongs to the anthranilate phosphoribosyltransferase family. In terms of assembly, homodimer. Requires Mg(2+) as cofactor.

The enzyme catalyses N-(5-phospho-beta-D-ribosyl)anthranilate + diphosphate = 5-phospho-alpha-D-ribose 1-diphosphate + anthranilate. The protein operates within amino-acid biosynthesis; L-tryptophan biosynthesis; L-tryptophan from chorismate: step 2/5. Catalyzes the transfer of the phosphoribosyl group of 5-phosphorylribose-1-pyrophosphate (PRPP) to anthranilate to yield N-(5'-phosphoribosyl)-anthranilate (PRA). The sequence is that of Anthranilate phosphoribosyltransferase from Sodalis glossinidius (strain morsitans).